The following is a 398-amino-acid chain: MDRYPDENGYFGEYGGRFVPETLMPALEELEDAFKEAREDPEFWEELEELWRKYAGRPTPLYYARNLSRKLGVKVYLKREDLVHGGAHKLNNTLGQALLADRMGKDRIIAETGAGQHGLATAMAGAALGKKVEIYMGAIDVERQKHNVFRMELMGAKVHPVKAGTQTLKDAINEALRDWITNLETTHYLLGSVVGPHPYPWIVREFQRVIGRETKEQITELEGGLPDAIVACTGGGSNSIGIFYDFLDDEEVALYAVEAGGKGLDTDEHSASLCAGEVGVLHGCRTKVLQDEHGQIRPTHSIAPGLDYPGVGPELAFLVDEGRVTADAVTDEEALRGFVMLNETEGILPALESAHAVYYVKKLVERGELDRGDVVVVNLSGRGDKDVRIAAEELGVEI.

N6-(pyridoxal phosphate)lysine is present on K89.

The protein belongs to the TrpB family. In terms of assembly, tetramer of two alpha and two beta chains. Requires pyridoxal 5'-phosphate as cofactor.

The catalysed reaction is (1S,2R)-1-C-(indol-3-yl)glycerol 3-phosphate + L-serine = D-glyceraldehyde 3-phosphate + L-tryptophan + H2O. It functions in the pathway amino-acid biosynthesis; L-tryptophan biosynthesis; L-tryptophan from chorismate: step 5/5. In terms of biological role, the beta subunit is responsible for the synthesis of L-tryptophan from indole and L-serine. This Methanopyrus kandleri (strain AV19 / DSM 6324 / JCM 9639 / NBRC 100938) protein is Tryptophan synthase beta chain.